Here is a 296-residue protein sequence, read N- to C-terminus: Cyclin-dependent kinase 1 (296 aa).

Residues 5-288 (FQKLEKIGEG…AKNGLSHKYF (284 aa)) enclose the Protein kinase domain. ATP contacts are provided by residues 11 to 19 (IGEGTYGVV) and lysine 34. Aspartate 130 functions as the Proton acceptor in the catalytic mechanism.

The protein belongs to the protein kinase superfamily. CMGC Ser/Thr protein kinase family. CDC2/CDKX subfamily.

The protein localises to the nucleus. It catalyses the reaction L-seryl-[protein] + ATP = O-phospho-L-seryl-[protein] + ADP + H(+). The catalysed reaction is L-threonyl-[protein] + ATP = O-phospho-L-threonyl-[protein] + ADP + H(+). Cyclin-dependent kinase that acts as a master regulator of the mitotic and meiotic cell cycles. The protein is Cyclin-dependent kinase 1 of Encephalitozoon cuniculi (strain GB-M1) (Microsporidian parasite).